Reading from the N-terminus, the 202-residue chain is MSRYRGPRVRIIRRLGTLPGLTNKTPQLKSGSINQSTSNKKISQYRIRLEEKQKLRFHYGITERQLLNYVRIARRAKGSTGEVLLQLSEMRLDNVIFRLGMAPTIPGARQLVNHRHILVNDYIVDIPSYRCKPQDFITIKNQQKSETIISKNIEFYQKSKIPNHLTYSSLEKKGLVNQILDRESIGLKINELLVVEYYSRQA.

In terms of domain architecture, S4 RNA-binding spans 90–153; it reads MRLDNVIFRL…KSETIISKNI (64 aa).

The protein belongs to the universal ribosomal protein uS4 family. In terms of assembly, part of the 30S ribosomal subunit. Contacts protein S5. The interaction surface between S4 and S5 is involved in control of translational fidelity.

The protein resides in the plastid. Its subcellular location is the chloroplast. Functionally, one of the primary rRNA binding proteins, it binds directly to 16S rRNA where it nucleates assembly of the body of the 30S subunit. Its function is as follows. With S5 and S12 plays an important role in translational accuracy. This chain is Small ribosomal subunit protein uS4c (rps4), found in Sphaerocarpos donnelli (Liverwort).